The chain runs to 394 residues: Protein BUR2 (394 aa).

Disordered stretches follow at residues 1–32 (MVLS…GNPQ) and 372–394 (MSER…KPRF). Polar residues predominate over residues 9–32 (IANSQPSGNGKTSLDIKQNEGNPQ). Residues 372–381 (MSERSIKRPS) are compositionally biased toward basic and acidic residues.

Belongs to the BUR kinase complex.

Its subcellular location is the nucleus. Its function is as follows. Component of the BUR kinase complex involved in transcription regulation. This complex phosphorylates the UBC2/RAD6 ubiquitin-conjugating enzyme (E2), leading to monoubiquitination of histone H2B and the silencing of telomeric-associated genes. Also required for histone H3 methylation. Necessary for the recovery from pheromone-induced growth arrest in the cell cycle G1 phase. The kinase activity of the complex requires the presence of BUR2. Overexpression of BUR2 interferes with mitotic chromosome segregation. The polypeptide is Protein BUR2 (BUR2) (Kluyveromyces lactis (strain ATCC 8585 / CBS 2359 / DSM 70799 / NBRC 1267 / NRRL Y-1140 / WM37) (Yeast)).